We begin with the raw amino-acid sequence, 370 residues long: MAAERQEALREFVAVTGAEEDRARFFLESAGWDLQIALASFYEDGGDEDIVTISQATPSSVSRGTAPSDNRVTSFRDLIHDQDEDEEEEEGQRFYAGGSERSGQQIVGPPRKKSPNELVDDLFKGAKEHGAVAVERVTKSPGETSKPRPFAGGGYRLGAAPEEESAYVAGEKRQHSSQDVHVVLKLWKSGFSLDNGELRSYQDPSNAQFLESIRRGEVPAELRRLAHGGQVNLDMEDHRDEDFVKPKGAFKAFTGEGQKLGSTAPQVLSTSSPAQQAENEAKASSSILIDESEPTTNIQIRLADGGRLVQKFNHSHRISDIRLFIVDARPAMAATSFILMTTFPNKELADESQTLKEANLLNAVIVQRLT.

The span at Ser-54–Thr-73 shows a compositional bias: polar residues. The interval Ser-54 to Asn-116 is disordered. A phosphoserine mark is found at Ser-74, Ser-102, Ser-114, and Ser-140. The Nuclear localization signal motif lies at Pro-109–Pro-115. Tyr-167 is subject to Phosphotyrosine. The Nuclear localization signal motif lies at Lys-172–His-175. Ser-176, Ser-192, and Ser-272 each carry phosphoserine. The SEP domain maps to Asp-179–Val-244. The span at Gly-261–Ile-287 shows a compositional bias: polar residues. The interval Gly-261 to Ile-289 is disordered. The region spanning Glu-291 to Arg-368 is the UBX domain.

Belongs to the NSFL1C family. As to quaternary structure, part of a ternary complex containing STX5A, NSFL1C and VCP. NSFL1C forms a homotrimer that binds to one end of a VCP homohexamer. The complex binds to membranes enriched in phosphatidylethanolamine-containing lipids and promotes Golgi membrane fusion. Interaction with VCIP135 leads to dissociation of the complex via ATP hydrolysis by VCP. Binds ubiquitin and mono-ubiquitinated proteins via its N-terminal UBA-like domain when bound to VCP. In terms of processing, phosphorylated during mitosis. Phosphorylation inhibits interaction with Golgi membranes and is required for the fragmentation of the Golgi stacks during mitosis.

It is found in the nucleus. The protein localises to the golgi apparatus. Its subcellular location is the golgi stack. It localises to the chromosome. The protein resides in the cytoplasm. It is found in the cytoskeleton. The protein localises to the microtubule organizing center. Its subcellular location is the centrosome. Reduces the ATPase activity of VCP. Necessary for the fragmentation of Golgi stacks during mitosis and for VCP-mediated reassembly of Golgi stacks after mitosis. May play a role in VCP-mediated formation of transitional endoplasmic reticulum (tER). Inhibits the activity of CTSL (in vitro). Together with UBXN2B/p37, regulates the centrosomal levels of kinase AURKA/Aurora A during mitotic progression by promoting AURKA removal from centrosomes in prophase. Also, regulates spindle orientation during mitosis. The sequence is that of NSFL1 cofactor p47 (NSFL1C) from Homo sapiens (Human).